Here is a 611-residue protein sequence, read N- to C-terminus: Dehydrogenase pkfF (611 aa).

The first 19 residues, 1–19, serve as a signal peptide directing secretion; that stretch reads MRHTALLPLVSSFIVPALA. N-linked (GlcNAc...) asparagine glycans are attached at residues Asn28 and Asn38. FAD is bound by residues 50–51, 71–72, and 137–140; these read TS, EA, and HYMV. Asn180, Asn187, Asn240, Asn272, Asn409, and Asn471 each carry an N-linked (GlcNAc...) asparagine glycan. His547 (proton acceptor) is an active-site residue. FAD-binding positions include Ala581 and 592–593; that span reads PQ.

This sequence belongs to the GMC oxidoreductase family. FAD is required as a cofactor.

It participates in secondary metabolite biosynthesis. Dehydrogenase; part of the gene cluster that mediates the biosynthesis of aspernidine A, a prenylated isoindolinone. The starting point of the biosynthesis of aspernidin A is the production of orsellinaldehyde by the non-reducing polyketide synthase pkfA. Hydroxylation, methylation of one of the phenol groups, and prenylation, presumably catalyzed by the prenyltransferase pkfE, would be needed to yield aspernidine D. Subsequently, the cytochrome P450 monooxygenase pkfB is responsible for hydroxylation of aspernidine D to yield aspernidine E. The dehydrogenase pkfF may be responsible for further oxidation of aspernidine E to form a dialdehyde intermediate which is further transformed in a series of steps, some of which are enzyme-mediated, to generate aspernidine A. The possibility that additional enzymes outside of the cluster are involved in aspernidine A biosynthesis cannot be excluded. The protein is Dehydrogenase pkfF of Emericella nidulans (strain FGSC A4 / ATCC 38163 / CBS 112.46 / NRRL 194 / M139) (Aspergillus nidulans).